The chain runs to 88 residues: Small ribosomal subunit protein bS20 (88 aa).

Residues 1–20 (MPNIKSAIKRTKTNNERRAH) form a disordered region.

Belongs to the bacterial ribosomal protein bS20 family.

In terms of biological role, binds directly to 16S ribosomal RNA. This chain is Small ribosomal subunit protein bS20, found in Bacillus velezensis (strain DSM 23117 / BGSC 10A6 / LMG 26770 / FZB42) (Bacillus amyloliquefaciens subsp. plantarum).